We begin with the raw amino-acid sequence, 163 residues long: Phosphopantetheine adenylyltransferase (163 aa).

Residue serine 9 coordinates substrate. ATP contacts are provided by residues 9–10 (SF) and histidine 17. Lysine 41, isoleucine 75, and arginine 89 together coordinate substrate. Residues 90-92 (GIR), glutamate 100, and 125-131 (HLYVRSD) each bind ATP.

It belongs to the bacterial CoaD family. In terms of assembly, homohexamer. Mg(2+) is required as a cofactor.

It is found in the cytoplasm. The catalysed reaction is (R)-4'-phosphopantetheine + ATP + H(+) = 3'-dephospho-CoA + diphosphate. The protein operates within cofactor biosynthesis; coenzyme A biosynthesis; CoA from (R)-pantothenate: step 4/5. Reversibly transfers an adenylyl group from ATP to 4'-phosphopantetheine, yielding dephospho-CoA (dPCoA) and pyrophosphate. The polypeptide is Phosphopantetheine adenylyltransferase (Borreliella burgdorferi (strain ZS7) (Borrelia burgdorferi)).